We begin with the raw amino-acid sequence, 231 residues long: Small ribosomal subunit protein uS3 (231 aa).

Residues 18–97 (VDEYLAKQFY…NPELNARVMA (80 aa)) enclose the KH type-2 domain.

Belongs to the universal ribosomal protein uS3 family. In terms of assembly, part of the 30S ribosomal subunit.

Binds the lower part of the 30S subunit head. In Sulfolobus acidocaldarius (strain ATCC 33909 / DSM 639 / JCM 8929 / NBRC 15157 / NCIMB 11770), this protein is Small ribosomal subunit protein uS3.